Reading from the N-terminus, the 416-residue chain is Probable protein phosphatase 2C 49 (416 aa).

In terms of domain architecture, PPM-type phosphatase spans 91–411 (RYGVTSVFGR…DNVSVVVVDL (321 aa)). Mn(2+) contacts are provided by Asp-131, Gly-132, and Asp-319. Over residues 343–360 (PPSPPGCSRPKAVLPPPA) the composition is skewed to pro residues. The disordered stretch occupies residues 343–368 (PPSPPGCSRPKAVLPPPAGASGGGGG). Mn(2+) is bound at residue Asp-402.

It belongs to the PP2C family. Mg(2+) is required as a cofactor. Requires Mn(2+) as cofactor.

It carries out the reaction O-phospho-L-seryl-[protein] + H2O = L-seryl-[protein] + phosphate. The enzyme catalyses O-phospho-L-threonyl-[protein] + H2O = L-threonyl-[protein] + phosphate. This Oryza sativa subsp. japonica (Rice) protein is Probable protein phosphatase 2C 49.